A 372-amino-acid chain; its full sequence is Glycerol-3-phosphate dehydrogenase [NAD(+)] (372 aa).

Over residues 1–16 (MAPSELNCTHQNQHSS) the composition is skewed to polar residues. Residues 1 to 23 (MAPSELNCTHQNQHSSGYDGPRS) are disordered. Residues 29 to 34 (GSGNWG), Phe60, Phe117, Lys140, and Ala173 contribute to the NAD(+) site. Lys140 contacts substrate. Lys225 (proton acceptor) is an active-site residue. NAD(+)-binding residues include Arg289, Lys318, and Gln320. 289–290 (RN) provides a ligand contact to substrate.

It belongs to the NAD-dependent glycerol-3-phosphate dehydrogenase family.

The enzyme catalyses sn-glycerol 3-phosphate + NAD(+) = dihydroxyacetone phosphate + NADH + H(+). In Cuphea lanceolata (Cigar flower), this protein is Glycerol-3-phosphate dehydrogenase [NAD(+)] (GPDH).